Reading from the N-terminus, the 75-residue chain is DNA-directed RNA polymerase subunit omega (75 aa).

It belongs to the RNA polymerase subunit omega family. As to quaternary structure, the RNAP catalytic core consists of 2 alpha, 1 beta, 1 beta' and 1 omega subunit. When a sigma factor is associated with the core the holoenzyme is formed, which can initiate transcription.

It carries out the reaction RNA(n) + a ribonucleoside 5'-triphosphate = RNA(n+1) + diphosphate. Its function is as follows. Promotes RNA polymerase assembly. Latches the N- and C-terminal regions of the beta' subunit thereby facilitating its interaction with the beta and alpha subunits. The polypeptide is DNA-directed RNA polymerase subunit omega (Nitratidesulfovibrio vulgaris (strain DSM 19637 / Miyazaki F) (Desulfovibrio vulgaris)).